The chain runs to 793 residues: uncharacterized protein (793 aa).

A signal peptide spans 1 to 22; the sequence is MKFKYGAIFFSGFLGLSAILAA. A lipid anchor (N-palmitoyl cysteine) is attached at cysteine 23. A lipid anchor (S-diacylglycerol cysteine) is attached at cysteine 23. 3 disordered regions span residues 181 to 200, 212 to 264, and 444 to 504; these read LNQKMTSSSEGKNSSGTLTV, KIED…DDQV, and KAPS…SNNN. Over residues 212 to 227 the composition is skewed to basic and acidic residues; it reads KIEDSAKANGKSDEKG. A compositionally biased stretch (polar residues) spans 237-246; it reads ATFSLVQLKQ. A compositionally biased stretch (basic and acidic residues) spans 247–264; sequence TQEKTDDSQDTKNSDDQV. Positions 449-468 are enriched in polar residues; it reads NGENGQTNEGNSTNGEQNLL. Residues 472–485 are compositionally biased toward basic and acidic residues; the sequence is EVKDDSKPKEEVKS. The span at 491–504 shows a compositional bias: low complexity; it reads KESSQNQGKKSNNN.

It belongs to the MG185/MG260 family.

The protein localises to the cell membrane. This is an uncharacterized protein from Mycoplasma pneumoniae (strain ATCC 29342 / M129 / Subtype 1) (Mycoplasmoides pneumoniae).